A 426-amino-acid polypeptide reads, in one-letter code: Dihydroorotase (426 aa).

Positions 62 and 64 each coordinate Zn(2+). Substrate-binding positions include 64-66 (HLR) and N96. D154, H181, H234, and D307 together coordinate Zn(2+). D307 is a catalytic residue. H311 provides a ligand contact to substrate.

The protein belongs to the metallo-dependent hydrolases superfamily. DHOase family. Class I DHOase subfamily. Requires Zn(2+) as cofactor.

It catalyses the reaction (S)-dihydroorotate + H2O = N-carbamoyl-L-aspartate + H(+). It participates in pyrimidine metabolism; UMP biosynthesis via de novo pathway; (S)-dihydroorotate from bicarbonate: step 3/3. In terms of biological role, catalyzes the reversible cyclization of carbamoyl aspartate to dihydroorotate. The protein is Dihydroorotase of Syntrophus aciditrophicus (strain SB).